Consider the following 313-residue polypeptide: Porphobilinogen deaminase (313 aa).

Cys242 carries the S-(dipyrrolylmethanemethyl)cysteine modification.

It belongs to the HMBS family. In terms of assembly, monomer. Dipyrromethane is required as a cofactor.

It catalyses the reaction 4 porphobilinogen + H2O = hydroxymethylbilane + 4 NH4(+). It functions in the pathway porphyrin-containing compound metabolism; protoporphyrin-IX biosynthesis; coproporphyrinogen-III from 5-aminolevulinate: step 2/4. Functionally, tetrapolymerization of the monopyrrole PBG into the hydroxymethylbilane pre-uroporphyrinogen in several discrete steps. The protein is Porphobilinogen deaminase of Escherichia fergusonii (strain ATCC 35469 / DSM 13698 / CCUG 18766 / IAM 14443 / JCM 21226 / LMG 7866 / NBRC 102419 / NCTC 12128 / CDC 0568-73).